The chain runs to 126 residues: Fatty acid-binding protein, liver (126 aa).

At A2 the chain carries N-acetylalanine. 5 residues coordinate cholate: R56, Q57, K77, H99, and Q101.

The protein belongs to the calycin superfamily. Fatty-acid binding protein (FABP) family.

It localises to the cytoplasm. Functionally, binds free fatty acids and their coenzyme A derivatives, bilirubin, and some other small molecules in the cytoplasm. May be involved in intracellular lipid transport. Binds 2 molecules of cholate per subunit. This Gallus gallus (Chicken) protein is Fatty acid-binding protein, liver (FABP1).